Consider the following 458-residue polypeptide: Ammonium transporter Rh type B (458 aa).

Over 1-13 the chain is Cytoplasmic; sequence MAGSPSRAAGRRL. A helical membrane pass occupies residues 14–34; sequence QLPLLCLFLQGATAVLFAVFV. Residues 35-61 are Extracellular-facing; the sequence is RYNHKTDAALWHRSNHSNADNEFYFRY. N49 is a glycosylation site (N-linked (GlcNAc...) asparagine). Residues 62–82 traverse the membrane as a helical segment; sequence PSFQDVHAMVFVGFGFLMVFL. The Cytoplasmic portion of the chain corresponds to 83–86; the sequence is QRYG. Residues 87-107 traverse the membrane as a helical segment; the sequence is FSSVGFTFLLAAFALQWSTLV. Topologically, residues 108 to 124 are extracellular; that stretch reads QGFLHSFHGGHIHVGVE. The helical transmembrane segment at 125-145 threads the bilayer; that stretch reads SMINADFCAGAVLISFGAVLG. Residues 146 to 149 lie on the Cytoplasmic side of the membrane; it reads KTGP. Residues 150–170 form a helical membrane-spanning segment; the sequence is TQLLLMALLEVVLFGINEFVL. The Extracellular portion of the chain corresponds to 171-178; that stretch reads LHLLGVRD. Residues 179-201 traverse the membrane as a helical segment; that stretch reads AGGSMTIHTFGAYFGLVLSRVLY. At 202 to 219 the chain is on the cytoplasmic side; that stretch reads RPQLEKSKHRQGSVYHSD. A helical transmembrane segment spans residues 220-240; sequence LFAMIGTIFLWIFWPSFNAAL. Residues 241–251 lie on the Extracellular side of the membrane; that stretch reads TALGAGQHRTA. Residues 252-272 traverse the membrane as a helical segment; sequence LNTYYSLAASTLGTFALSALV. The Cytoplasmic segment spans residues 273–282; it reads GEDGRLDMVH. The chain crosses the membrane as a helical span at residues 283–303; that stretch reads IQNAALAGGVVVGTSSEMMLT. P304 is a topological domain (extracellular). Residues 305–325 traverse the membrane as a helical segment; it reads FGALAAGFLAGTVSTLGYKFF. Topologically, residues 326 to 346 are cytoplasmic; that stretch reads TPILESKFKVQDTCGVHNLHG. A helical transmembrane segment spans residues 347–367; the sequence is MPGVLGALLGVLVAGLATHEA. Residues 368–393 are Extracellular-facing; sequence YGDGLESVFPLIAEGQRSATSQAMHQ. The chain crosses the membrane as a helical span at residues 394–414; that stretch reads LFGLFVTLMFASVGGGLGGLL. At 415–458 the chain is on the cytoplasmic side; that stretch reads LKLPFLDSPPDSQHYEDQVHWQVPGEHEDKAQRPLRVEEADTQA. Positions 416–424 are interaction with ANK3; it reads KLPFLDSPP. The segment at 436–458 is disordered; the sequence is QVPGEHEDKAQRPLRVEEADTQA.

Belongs to the ammonium transporter (TC 2.A.49) family. Rh subfamily. As to quaternary structure, interacts (via C-terminus) with ANK2 and ANK3; required for targeting to the basolateral membrane. In terms of processing, N-glycosylated. As to expression, specifically expressed in kidney. Also detected in liver and ovary.

The protein resides in the cell membrane. It localises to the basolateral cell membrane. It catalyses the reaction NH4(+)(in) = NH4(+)(out). It carries out the reaction methylamine(out) = methylamine(in). The catalysed reaction is CO2(out) = CO2(in). Its function is as follows. Ammonium transporter involved in the maintenance of acid-base homeostasis. Transports ammonium and its related derivative methylammonium across the basolateral plasma membrane of epithelial cells likely contributing to renal transepithelial ammonia transport and ammonia metabolism. May transport either NH4(+) or NH3 ammonia species predominantly mediating an electrogenic NH4(+) transport. May act as a CO2 channel providing for renal acid secretion. The polypeptide is Ammonium transporter Rh type B (Homo sapiens (Human)).